The following is a 73-amino-acid chain: RNA-binding protein Hfq (73 aa).

A Sm domain is found at 8 to 68 (DQFLNQIRKD…ISTFAPQKNV (61 aa)).

This sequence belongs to the Hfq family. Homohexamer.

In terms of biological role, RNA chaperone that binds small regulatory RNA (sRNAs) and mRNAs to facilitate mRNA translational regulation in response to envelope stress, environmental stress and changes in metabolite concentrations. Also binds with high specificity to tRNAs. The protein is RNA-binding protein Hfq of Bacillus velezensis (strain DSM 23117 / BGSC 10A6 / LMG 26770 / FZB42) (Bacillus amyloliquefaciens subsp. plantarum).